Consider the following 260-residue polypeptide: Serine/threonine-protein acetyltransferase NGR_a02610 (260 aa).

Residues histidine 123 and glutamate 143 contribute to the active site. Histidine 123 lines the CoA pocket. 180 to 181 (KS) is a CoA binding site. Residue cysteine 185 is part of the active site.

This sequence belongs to the acetyltransferase YopJ family.

It carries out the reaction L-threonyl-[protein] + acetyl-CoA = O-acetyl-L-threonyl-[protein] + CoA. The enzyme catalyses L-seryl-[protein] + acetyl-CoA = O-acetyl-L-seryl-[protein] + CoA. Its function is as follows. Serine/threonine-protein acetyltransferase translocated into infected cells, which mediates acetylation of serine and threonine residues of host target proteins. The protein is Serine/threonine-protein acetyltransferase NGR_a02610 of Sinorhizobium fredii (strain NBRC 101917 / NGR234).